Here is a 306-residue protein sequence, read N- to C-terminus: Homoserine kinase (306 aa).

Pro90–Ser100 is a binding site for ATP.

This sequence belongs to the GHMP kinase family. Homoserine kinase subfamily.

It is found in the cytoplasm. It catalyses the reaction L-homoserine + ATP = O-phospho-L-homoserine + ADP + H(+). Its pathway is amino-acid biosynthesis; L-threonine biosynthesis; L-threonine from L-aspartate: step 4/5. Catalyzes the ATP-dependent phosphorylation of L-homoserine to L-homoserine phosphate. This is Homoserine kinase from Staphylococcus epidermidis (strain ATCC 12228 / FDA PCI 1200).